A 313-amino-acid chain; its full sequence is Biotin synthase (313 aa).

The 231-residue stretch at 28–258 folds into the Radical SAM core domain; it reads NFGNDIELCS…LFPQARLRLS (231 aa). Residues Cys-46, Cys-50, and Cys-53 each coordinate [4Fe-4S] cluster. Residues Cys-90, Cys-121, Cys-181, and Arg-256 each contribute to the [2Fe-2S] cluster site.

It belongs to the radical SAM superfamily. Biotin synthase family. In terms of assembly, homodimer. [4Fe-4S] cluster serves as cofactor. The cofactor is [2Fe-2S] cluster.

It carries out the reaction (4R,5S)-dethiobiotin + (sulfur carrier)-SH + 2 reduced [2Fe-2S]-[ferredoxin] + 2 S-adenosyl-L-methionine = (sulfur carrier)-H + biotin + 2 5'-deoxyadenosine + 2 L-methionine + 2 oxidized [2Fe-2S]-[ferredoxin]. It functions in the pathway cofactor biosynthesis; biotin biosynthesis; biotin from 7,8-diaminononanoate: step 2/2. Catalyzes the conversion of dethiobiotin (DTB) to biotin by the insertion of a sulfur atom into dethiobiotin via a radical-based mechanism. This is Biotin synthase from Francisella tularensis subsp. mediasiatica (strain FSC147).